A 306-amino-acid chain; its full sequence is UDP-3-O-acyl-N-acetylglucosamine deacetylase (306 aa).

Zn(2+) contacts are provided by H79, H238, and D242. The Proton donor role is filled by H265.

This sequence belongs to the LpxC family. Zn(2+) serves as cofactor.

The catalysed reaction is a UDP-3-O-[(3R)-3-hydroxyacyl]-N-acetyl-alpha-D-glucosamine + H2O = a UDP-3-O-[(3R)-3-hydroxyacyl]-alpha-D-glucosamine + acetate. The protein operates within glycolipid biosynthesis; lipid IV(A) biosynthesis; lipid IV(A) from (3R)-3-hydroxytetradecanoyl-[acyl-carrier-protein] and UDP-N-acetyl-alpha-D-glucosamine: step 2/6. In terms of biological role, catalyzes the hydrolysis of UDP-3-O-myristoyl-N-acetylglucosamine to form UDP-3-O-myristoylglucosamine and acetate, the committed step in lipid A biosynthesis. In Shewanella piezotolerans (strain WP3 / JCM 13877), this protein is UDP-3-O-acyl-N-acetylglucosamine deacetylase.